A 1141-amino-acid chain; its full sequence is PR domain zinc finger protein 15 (1141 aa).

In terms of domain architecture, SET spans 49–159 (PNLEIRRLED…PGTELRVWYA (111 aa)). The segment at 197–219 (WACKVCSATFLELQLLNEHLLGH) adopts a C2H2-type 1 zinc-finger fold. Residues 224–283 (KSLPPGSQSEAAAPEKEQDTPRGEPPAVPESENVATKEQKKKPRRGRKPKVSKAEQPLVI) form a disordered region. Positions 236–245 (APEKEQDTPR) are enriched in basic and acidic residues. The span at 262–274 (QKKKPRRGRKPKV) shows a compositional bias: basic residues. C2H2-type zinc fingers lie at residues 372 to 394 (YQCNICSKIFQNSSNLSRHVRSH), 399 to 422 (FKCEECAKLFSRKESLKQHVSYKH), 460 to 482 (FQCEMCFRFFSTNSNLSKHKKKH), and 487 to 509 (FACEVCSKMFYRKDVMLDHQRRH). A Glycyl lysine isopeptide (Lys-Gly) (interchain with G-Cter in SUMO2) cross-link involves residue lysine 517. 2 consecutive C2H2-type zinc fingers follow at residues 536–558 (SGCPVCGKVFSCRSNMNKHLLTH) and 563–585 (YTCEICGRKFFRVDVLRDHIHVH). Residues 604–623 (IGISSEENDDNSDESADSEP) form a disordered region. The segment covering 609 to 620 (EENDDNSDESAD) has biased composition (acidic residues). C2H2-type zinc fingers lie at residues 626-649 (YSCKRCQLTFGRGKEYLKHIMEVH), 654-676 (YGCSICNRRFALKATYHAHMVIH), 690-712 (HPCEICGRIFNSIGNLERHKLIH), 718-740 (HACEQCGKSFARKDMLKEHMRVH), 746-768 (YLCAECGKGMKTKHALRHHMKLH), 774-796 (YECKECHRRFAQKVNMLKHCKRH), 802-824 (FMCELCGKTFSERNTMETHKLIH), 830-853 (WTCSVCDKKYVTEYMLQKHVQLTH), and 859-882 (QSCQLCGTKVSTRASMSRHMRRKH). 2 disordered regions span residues 922-973 (AEGK…DETN) and 1108-1141 (QTDVLPPSQPQAPPQQAAQPQVQAEQQQQQMYSY). The span at 927–938 (GKAAKRSHKRKQ) shows a compositional bias: basic residues. A compositionally biased stretch (low complexity) spans 1121–1141 (PQQAAQPQVQAEQQQQQMYSY).

The protein belongs to the class V-like SAM-binding methyltransferase superfamily. As to expression, detected in all tissues examined.

It localises to the nucleus. Sequence-specific DNA-binding transcriptional regulator. Plays a role as a molecular node in a transcriptional network regulating embryonic development and cell fate decision. Stimulates the expression of upstream key transcriptional activators and repressors of the Wnt/beta-catenin and MAPK/ERK pathways, respectively, that are essential for naive pluripotency and self-renewal maintenance of embryonic stem cells (ESCs). Specifically promotes SPRY1 and RSPO1 transcription activation through recognition and direct binding of a specific DNA sequence in their promoter regions. Involved in early embryo development. Also plays a role in induced pluripotent stem cells (iPSCs) reprogramming. This is PR domain zinc finger protein 15 from Homo sapiens (Human).